The sequence spans 226 residues: V-type proton ATPase subunit E 2 (226 aa).

This sequence belongs to the V-ATPase E subunit family. As to quaternary structure, V-ATPase is a heteromultimeric enzyme made up of two complexes: the ATP-hydrolytic V1 complex and the proton translocation V0 complex. The V1 complex consists of three catalytic AB heterodimers that form a heterohexamer, three peripheral stalks each consisting of EG heterodimers, one central rotor including subunits D and F, and the regulatory subunits C and H. The proton translocation complex V0 consists of the proton transport subunit a, a ring of proteolipid subunits c9c'', rotary subunit d, subunits e and f, and the accessory subunits ATP6AP1/Ac45 and ATP6AP2/PRR. In terms of tissue distribution, testis specific.

Its function is as follows. Subunit of the V1 complex of vacuolar(H+)-ATPase (V-ATPase), a multisubunit enzyme composed of a peripheral complex (V1) that hydrolyzes ATP and a membrane integral complex (V0) that translocates protons. V-ATPase is responsible for acidifying and maintaining the pH of intracellular compartments and in some cell types, is targeted to the plasma membrane, where it is responsible for acidifying the extracellular environment. The protein is V-type proton ATPase subunit E 2 (ATP6V1E2) of Homo sapiens (Human).